The sequence spans 108 residues: Class I hydrophobin hgfII (108 aa).

Residues 1–19 (MFSRIAAVSFLALPLLAAA) form the signal peptide. Disulfide bonds link Cys-28/Cys-89, Cys-35/Cys-83, Cys-36/Cys-69, and Cys-90/Cys-103. Asn-92 is a glycosylation site (N-linked (GlcNAc...) asparagine).

It belongs to the fungal hydrophobin family. Self-assembles to form functional amyloid fibrils called rodlets with a diameter of 15-30 nm. Self-assembly into fibrillar rodlets occurs spontaneously at hydrophobic:hydrophilic interfaces and the rodlets further associate laterally to form amphipathic monolayers. As to expression, highky expressed in hyphae cultured in liquid medium.

Its subcellular location is the secreted. It is found in the cell wall. Its function is as follows. Aerial growth, conidiation, and dispersal of filamentous fungi in the environment rely upon a capability of their secreting small amphipathic proteins called hydrophobins (HPBs) with low sequence identity. Class I can self-assemble into an outermost layer of rodlet bundles on aerial cell surfaces, conferring cellular hydrophobicity that supports fungal growth, development and dispersal; whereas Class II form highly ordered films at water-air interfaces through intermolecular interactions but contribute nothing to the rodlet structure. HgfII is a class I hydrophobin that is involved in cell surface hydrophobicity and might play a key role during the growth and development of hyphae cultured in liquid medium. This is Class I hydrophobin hgfII from Grifola frondosa (Maitake).